A 1132-amino-acid polypeptide reads, in one-letter code: DNA-directed RNA polymerase subunit beta (1132 aa).

This sequence belongs to the RNA polymerase beta chain family. In terms of assembly, the RNAP catalytic core consists of 2 alpha, 1 beta, 1 beta' and 1 omega subunit. When a sigma factor is associated with the core the holoenzyme is formed, which can initiate transcription.

The enzyme catalyses RNA(n) + a ribonucleoside 5'-triphosphate = RNA(n+1) + diphosphate. Functionally, DNA-dependent RNA polymerase catalyzes the transcription of DNA into RNA using the four ribonucleoside triphosphates as substrates. This Carboxydothermus hydrogenoformans (strain ATCC BAA-161 / DSM 6008 / Z-2901) protein is DNA-directed RNA polymerase subunit beta.